A 462-amino-acid polypeptide reads, in one-letter code: Glycine--tRNA ligase (462 aa).

Substrate is bound by residues arginine 99 and glutamate 174. ATP contacts are provided by residues arginine 206–glutamate 208, phenylalanine 216–phenylalanine 221, glutamate 290–leucine 291, and glycine 334–arginine 337. A substrate-binding site is contributed by phenylalanine 221 to glutamate 225. Glutamate 330–glycine 334 provides a ligand contact to substrate.

The protein belongs to the class-II aminoacyl-tRNA synthetase family. Homodimer.

It localises to the cytoplasm. The catalysed reaction is tRNA(Gly) + glycine + ATP = glycyl-tRNA(Gly) + AMP + diphosphate. Functionally, catalyzes the attachment of glycine to tRNA(Gly). This Macrococcus caseolyticus (strain JCSC5402) (Macrococcoides caseolyticum) protein is Glycine--tRNA ligase.